The primary structure comprises 557 residues: 2-isopropylmalate synthase (557 aa).

Positions 33-307 (PIWCSSDLRD…DPQLDFSDID (275 aa)) constitute a Pyruvate carboxyltransferase domain. 4 residues coordinate Mg(2+): Asp42, His246, His248, and Asn282. Residues 439 to 557 (ANAPYALVSH…SLSQQQAKAA (119 aa)) form a regulatory domain region.

The protein belongs to the alpha-IPM synthase/homocitrate synthase family. LeuA type 2 subfamily. Homodimer. It depends on Mg(2+) as a cofactor.

It localises to the cytoplasm. It catalyses the reaction 3-methyl-2-oxobutanoate + acetyl-CoA + H2O = (2S)-2-isopropylmalate + CoA + H(+). The protein operates within amino-acid biosynthesis; L-leucine biosynthesis; L-leucine from 3-methyl-2-oxobutanoate: step 1/4. In terms of biological role, catalyzes the condensation of the acetyl group of acetyl-CoA with 3-methyl-2-oxobutanoate (2-ketoisovalerate) to form 3-carboxy-3-hydroxy-4-methylpentanoate (2-isopropylmalate). This chain is 2-isopropylmalate synthase, found in Pseudomonas entomophila (strain L48).